The following is a 64-amino-acid chain: Large ribosomal subunit protein bL33 (64 aa).

The tract at residues 19–40 is disordered; the sequence is TSTDPKRSNGVSRYTTEKNRRN.

The protein belongs to the bacterial ribosomal protein bL33 family.

This is Large ribosomal subunit protein bL33 from Prochlorococcus marinus (strain MIT 9215).